The sequence spans 274 residues: Large ribosomal subunit protein uL2cz/uL2cy (274 aa).

2 disordered regions span residues 1–24 (MAIH…QVKS) and 223–274 (MNPV…RRSK). The span at 7–24 (KTSTPSTRNGTVDSQVKS) shows a compositional bias: polar residues.

Belongs to the universal ribosomal protein uL2 family. In terms of assembly, part of the 50S ribosomal subunit.

Its subcellular location is the plastid. The protein resides in the chloroplast. The protein is Large ribosomal subunit protein uL2cz/uL2cy (rpl2-A) of Nicotiana sylvestris (Wood tobacco).